The following is a 399-amino-acid chain: Elongation factor Tu (399 aa).

In terms of domain architecture, tr-type G spans 10–204; the sequence is KPHVNIGTIG…AVDASIPEPE (195 aa). The G1 stretch occupies residues 19–26; that stretch reads GHVDHGKT. Residue 19 to 26 coordinates GTP; the sequence is GHVDHGKT. T26 contributes to the Mg(2+) binding site. The interval 60-64 is G2; sequence GITIN. The segment at 81–84 is G3; it reads DCPG. Residues 81-85 and 136-139 contribute to the GTP site; these read DCPGH and NKCD. The tract at residues 136–139 is G4; that stretch reads NKCD. The segment at 174 to 176 is G5; sequence SGL.

It belongs to the TRAFAC class translation factor GTPase superfamily. Classic translation factor GTPase family. EF-Tu/EF-1A subfamily. As to quaternary structure, monomer.

Its subcellular location is the cytoplasm. The catalysed reaction is GTP + H2O = GDP + phosphate + H(+). Functionally, GTP hydrolase that promotes the GTP-dependent binding of aminoacyl-tRNA to the A-site of ribosomes during protein biosynthesis. This is Elongation factor Tu from Prochlorococcus marinus (strain SARG / CCMP1375 / SS120).